Consider the following 1270-residue polypeptide: Myosin-binding protein C, cardiac-type (1270 aa).

Methionine 1 is subject to N-acetylmethionine. The disordered stretch occupies residues 1–24 (MPEPGKKPVSAFNKKPRSAEVTAG). Phosphoserine is present on residues serine 47 and serine 72. Basic and acidic residues predominate over residues 94–105 (VTEPAPPEKAES). The interval 94-152 (VTEPAPPEKAESEVAPGAPEEVPAPATELEESVSSPEGSVSVTQDGSAAEHQGAPDDPI) is disordered. Positions 106–135 (EVAPGAPEEVPAPATELEESVSSPEGSVSV) are enriched in low complexity. One can recognise an Ig-like C2-type 1 domain in the interval 151-254 (PIGLFLMRPQ…FDSCNFNLTV (104 aa)). Residues glutamine 206, histidine 208, glutamate 221, and histidine 223 each coordinate Zn(2+). 3 positions are modified to phosphoserine; by PKA and PKC: serine 273, serine 282, and serine 302. Phosphoserine occurs at positions 307 and 423. Ig-like C2-type domains are found at residues 358–448 (STAF…VKEP), 449–539 (PVLI…VQEK), 540–629 (KLEV…HFME), and 641–767 (PKIH…VIDV). The cysteines at positions 432 and 439 are disulfide-linked. Phosphoserine is present on residues serine 455 and serine 546. A Phosphothreonine modification is found at threonine 603. Residues 683–702 (VTQGKKASAGPHPDAPEDAG) form a disordered region. Fibronectin type-III domains follow at residues 770 to 866 (APAA…IGPP) and 868 to 963 (EPTH…VQEI). The Ig-like C2-type 6 domain occupies 967-1061 (PRLQLPRHLR…ATLILQIVDK (95 aa)). Residues 1064–1159 (PPQDIRIVET…TKEPVFIPRP (96 aa)) form the Fibronectin type-III 3 domain. An Ig-like C2-type 7 domain is found at 1177 to 1270 (PSFTQPLANR…ECRLEVRVPQ (94 aa)). Omega-N-methylarginine is present on arginine 1237.

The protein belongs to the immunoglobulin superfamily. MyBP family. Post-translationally, substrate for phosphorylation by PKA and PKC. Reversible phosphorylation appears to modulate contraction. Polyubiquitinated.

Its function is as follows. Thick filament-associated protein located in the crossbridge region of vertebrate striated muscle a bands. In vitro it binds MHC, F-actin and native thin filaments, and modifies the activity of actin-activated myosin ATPase. It may modulate muscle contraction or may play a more structural role. This Mus musculus (Mouse) protein is Myosin-binding protein C, cardiac-type (Mybpc3).